The following is a 417-amino-acid chain: Caveolae-associated protein 2 (417 aa).

The tract at residues 1 to 42 is disordered; that stretch reads MGEDAAQAEKFQHPNTDMLQEKPSNPSPMPSSTPSPSLNLGS. Gly-2 bears the N-acetylglycine mark. The segment at 2–168 is interaction with CAVIN1; that stretch reads GEDAAQAEKF…IFQEESEIPA (167 aa). Ser-27, Ser-35, Ser-37, and Ser-51 each carry phosphoserine. Coiled coils occupy residues 61–87 and 126–267; these read LLDK…INLE and RAVR…VERR. Positions 62 to 100 are leucine-zipper; it reads LDKLVNMLDAVRENQHNMEQRQINLEGSVKGIQNDLTKL. A Phosphothreonine modification is found at Thr-195. 2 disordered regions span residues 198 to 242 and 256 to 381; these read NVDL…DSLK and KLGT…ALQQ. A phosphoserine mark is found at Ser-202, Ser-203, and Ser-217. The span at 202-218 shows a compositional bias: acidic residues; that stretch reads SSDDELPGDEEALEDSA. A compositionally biased stretch (basic and acidic residues) spans 219 to 242; it reads EEKMEESRAEKIKRSSLKKVDSLK. Over residues 274 to 286 the composition is skewed to polar residues; the sequence is LTPNHQKASSGKS. Residues Ser-282, Ser-283, Ser-286, Ser-287, Ser-292, and Ser-295 each carry the phosphoserine modification. Residues 302-320 show a composition bias toward basic and acidic residues; sequence REGESSAENETKLEEQVQD. 4 positions are modified to phosphoserine: Ser-326, Ser-335, Ser-358, and Ser-362. Positions 354–365 are enriched in polar residues; it reads RGNNSGVGSNAD. Thr-367 carries the post-translational modification Phosphothreonine. Acidic residues predominate over residues 367–376; the sequence is TIEEDEEEES. Phosphotyrosine is present on Tyr-387. Residues Ser-389 and Ser-395 each carry the phosphoserine modification.

Belongs to the CAVIN family. As to quaternary structure, component of the CAVIN complex composed of CAVIN1, CAVIN2, CAVIN3 and CAVIN. Interacts with CAVIN4; this augments the transactivation of NPPA by CAVIN4. Binds to PRKCA in the presence of phosphatidylserine. Interacts with CAVIN1 and CAV3. The N-terminus is blocked. Post-translationally, phosphorylated on Ser residues.

It localises to the cytoplasm. It is found in the cytosol. The protein resides in the membrane. Its subcellular location is the caveola. Functionally, plays an important role in caveolar biogenesis and morphology. Regulates caveolae morphology by inducing membrane curvature within caveolae. Plays a role in caveola formation in a tissue-specific manner. Required for the formation of caveolae in the lung and fat endothelia but not in the heart endothelia. Negatively regulates the size or stability of CAVIN complexes in the lung endothelial cells. May play a role in targeting PRKCA to caveolae. The protein is Caveolae-associated protein 2 of Rattus norvegicus (Rat).